A 757-amino-acid chain; its full sequence is Lysyl oxidase homolog 4 (757 aa).

The first 25 residues, 1 to 25, serve as a signal peptide directing secretion; it reads MMWPQPPTFSLFLLLLLSQAPSSRP. SRCR domains are found at residues 33-134, 160-288, 312-412, and 422-530; these read LRLV…VVCH, VRLK…VSCV, VRLR…VRCN, and VRLA…VACM. 17 disulfide bridges follow: cysteine 59/cysteine 123, cysteine 72/cysteine 133, cysteine 103/cysteine 113, cysteine 192/cysteine 277, cysteine 205/cysteine 287, cysteine 252/cysteine 262, cysteine 337/cysteine 401, cysteine 350/cysteine 411, cysteine 381/cysteine 391, cysteine 451/cysteine 516, cysteine 464/cysteine 529, cysteine 498/cysteine 508, cysteine 559/cysteine 565, cysteine 611/cysteine 659, cysteine 643/cysteine 649, cysteine 671/cysteine 681, and cysteine 718/cysteine 732. The N-linked (GlcNAc...) asparagine glycan is linked to asparagine 199. Residues 534–737 form a lysyl-oxidase like region; it reads PDLVMNAQLV…WLHNCHTGDS (204 aa). Histidine 612, histidine 614, and histidine 616 together coordinate Cu cation. Asparagine 630 is a glycosylation site (N-linked (GlcNAc...) asparagine). The segment at residues 639–675 is a cross-link (lysine tyrosylquinone (Lys-Tyr)); it reads KASFCLEDTNCPSGVQRRYACANFGEQGVAVGCWDTY. Tyrosine 675 carries the 2',4',5'-topaquinone modification.

Belongs to the lysyl oxidase family. Cu cation is required as a cofactor. Lysine tyrosylquinone residue serves as cofactor. Post-translationally, the lysine tyrosylquinone cross-link (LTQ) is generated by condensation of the epsilon-amino group of a lysine with a topaquinone produced by oxidation of tyrosine. May be proteolytically cleaved by BMP1.

Its subcellular location is the secreted. The protein localises to the extracellular space. The catalysed reaction is L-lysyl-[protein] + O2 + H2O = (S)-2-amino-6-oxohexanoyl-[protein] + H2O2 + NH4(+). Its function is as follows. Catalyzes the oxidative deamination of lysine and hydroxylysine residues in collagen and elastin, resulting in the formation of covalent cross-linkages, and the stabilization of collagen and elastin fibers. This is Lysyl oxidase homolog 4 (Loxl4) from Mus musculus (Mouse).